Reading from the N-terminus, the 753-residue chain is Transcription factor SOX-30 (753 aa).

Disordered stretches follow at residues 1-45 (MERA…TLSA) and 140-161 (QELG…TGPR). The segment covering 7-22 (EPQPQQRPLRPAPPLL) has biased composition (pro residues). Positions 337 to 405 (VKRPMNAFMV…KHREEFPGWV (69 aa)) form a DNA-binding region, HMG box. 2 disordered regions span residues 514–540 (AGPS…PVSL) and 726–753 (PTST…LRDL). Polar residues-rich tracts occupy residues 531–540 (TVKQPTPVSL) and 726–739 (PTST…VNVT).

As to quaternary structure, interacts with CTNNB1, competitively inhibiting CTNNB1-TCF7L2/TCF4 interaction.

The protein resides in the nucleus. It is found in the cytoplasm. Its function is as follows. Acts both as a transcriptional activator and a repressor. Binds to the DNA sequence 5'-ACAAT-3' and shows a preference for guanine residues surrounding this core motif. Binds to its own promoter and activates its own transcription. Required to activate the expression of postmeiotic genes involved in spermiogenesis. Binds to the promoter region of CTNNB1 and represses its transcription which leads to inhibition of Wnt signaling. Also inhibits Wnt signaling by binding to the CTNNB1 protein, preventing interaction of CTNNB1 with TCF7L2/TCF4. The polypeptide is Transcription factor SOX-30 (SOX30) (Macaca fascicularis (Crab-eating macaque)).